The primary structure comprises 99 residues: UPF0235 protein Neut_2146 (99 aa).

It belongs to the UPF0235 family.

This Nitrosomonas eutropha (strain DSM 101675 / C91 / Nm57) protein is UPF0235 protein Neut_2146.